The chain runs to 1304 residues: NAD-dependent protein deacetylase Sir2B (1304 aa).

The 439-residue stretch at 28–466 (TEEEKKKVKE…LISIHNIKMK (439 aa)) folds into the Deacetylase sirtuin-type domain. Residues 53 to 72 (GAGI…TGIW) and 274 to 277 (QNID) contribute to the NAD(+) site. The Proton acceptor role is filled by His-294. Zn(2+)-binding residues include Cys-302, Cys-305, Cys-327, and Cys-330. NAD(+) contacts are provided by residues 371-373 (GSS), 399-401 (NYQ), and Val-417. 3 disordered regions span residues 545 to 585 (EHNN…SSSI), 749 to 827 (KVKS…DKDN), and 1154 to 1203 (EIKY…DDNN). Low complexity-rich tracts occupy residues 548–585 (NNNN…SSSI), 756–806 (NNNN…ISDH), and 1182–1203 (DDNN…DDNN).

This sequence belongs to the sirtuin family. Class IV subfamily. It depends on Zn(2+) as a cofactor.

The catalysed reaction is N(6)-acetyl-L-lysyl-[protein] + NAD(+) + H2O = 2''-O-acetyl-ADP-D-ribose + nicotinamide + L-lysyl-[protein]. Regulates the expression of the surface antigen-coding var genes central to the malaria pathogenesis. Cooperates with Sir2A to mediate silencing and mutual exclusive expression of only 1 of the 60 subtelomeric var genes at a time, coding for functionally different but epitopically variant versions of the erythrocyte membrane protein 1 (PfEMP1) molecule, to evade the detection by host immune surveillance. The polypeptide is NAD-dependent protein deacetylase Sir2B (Plasmodium falciparum (isolate 3D7)).